Here is a 284-residue protein sequence, read N- to C-terminus: Tropomyosin (284 aa).

Residues 1–273 (MDAIKKKMVA…KEKYKAISDE (273 aa)) are a coiled coil. The span at 110 to 130 (SGKLEEASKAADESERNRKVL) shows a compositional bias: basic and acidic residues. Residues 110-134 (SGKLEEASKAADESERNRKVLENLN) are disordered.

The protein belongs to the tropomyosin family. Homodimer.

Tropomyosin, in association with the troponin complex, plays a central role in the calcium dependent regulation of muscle contraction. The protein is Tropomyosin of Perna viridis (Asian green mussel).